The sequence spans 234 residues: Large ribosomal subunit protein uL1 (234 aa).

The protein belongs to the universal ribosomal protein uL1 family. In terms of assembly, part of the 50S ribosomal subunit.

Functionally, binds directly to 23S rRNA. The L1 stalk is quite mobile in the ribosome, and is involved in E site tRNA release. Protein L1 is also a translational repressor protein, it controls the translation of the L11 operon by binding to its mRNA. The chain is Large ribosomal subunit protein uL1 from Edwardsiella ictaluri (strain 93-146).